The following is a 408-amino-acid chain: Serine/threonine transporter SstT (408 aa).

The next 9 membrane-spanning stretches (helical) occupy residues 11–31, 43–63, 82–102, 141–161, 192–212, 216–236, 290–310, 316–336, and 363–383; these read LANG…VALA, FLGS…VFIL, IVVL…ILSM, ALMT…GLAL, IGIF…AIAG, LLAV…PLIV, IPLG…VLTL, LGIQ…AISA, and VAMQ…AAET.

Belongs to the dicarboxylate/amino acid:cation symporter (DAACS) (TC 2.A.23) family.

The protein localises to the cell inner membrane. It carries out the reaction L-serine(in) + Na(+)(in) = L-serine(out) + Na(+)(out). It catalyses the reaction L-threonine(in) + Na(+)(in) = L-threonine(out) + Na(+)(out). Involved in the import of serine and threonine into the cell, with the concomitant import of sodium (symport system). This is Serine/threonine transporter SstT from Shewanella oneidensis (strain ATCC 700550 / JCM 31522 / CIP 106686 / LMG 19005 / NCIMB 14063 / MR-1).